We begin with the raw amino-acid sequence, 369 residues long: Carbamoyl phosphate synthase small chain (369 aa).

The segment at 1–168 (MYGILVLEDG…KKVVKYPAKD (168 aa)) is CPSase. L-glutamine is bound by residues Ser-45, Gly-220, and Gly-222. The 193-residue stretch at 172–364 (SCVVIDCGVK…VALGMKFKQE (193 aa)) folds into the Glutamine amidotransferase type-1 domain. Cys-247 functions as the Nucleophile in the catalytic mechanism. Residues Leu-248, Gln-251, Asn-289, Gly-291, and Phe-292 each contribute to the L-glutamine site. Active-site residues include His-337 and Glu-339.

Belongs to the CarA family. Composed of two chains; the small (or glutamine) chain promotes the hydrolysis of glutamine to ammonia, which is used by the large (or ammonia) chain to synthesize carbamoyl phosphate. Tetramer of heterodimers (alpha,beta)4.

It catalyses the reaction hydrogencarbonate + L-glutamine + 2 ATP + H2O = carbamoyl phosphate + L-glutamate + 2 ADP + phosphate + 2 H(+). The catalysed reaction is L-glutamine + H2O = L-glutamate + NH4(+). The protein operates within amino-acid biosynthesis; L-arginine biosynthesis; carbamoyl phosphate from bicarbonate: step 1/1. It functions in the pathway pyrimidine metabolism; UMP biosynthesis via de novo pathway; (S)-dihydroorotate from bicarbonate: step 1/3. Functionally, small subunit of the glutamine-dependent carbamoyl phosphate synthetase (CPSase). CPSase catalyzes the formation of carbamoyl phosphate from the ammonia moiety of glutamine, carbonate, and phosphate donated by ATP, constituting the first step of 2 biosynthetic pathways, one leading to arginine and/or urea and the other to pyrimidine nucleotides. The small subunit (glutamine amidotransferase) binds and cleaves glutamine to supply the large subunit with the substrate ammonia. The protein is Carbamoyl phosphate synthase small chain of Methanococcus vannielii (strain ATCC 35089 / DSM 1224 / JCM 13029 / OCM 148 / SB).